The following is a 1283-amino-acid chain: MATSAVQSAACPPNTFTCADGSCIPSDWKGDGEKDCEDGSDEEAVTGETTTKFDEVVSAPTTPGSDEDCDWGMQQRIDNCSEPIVHFLSQIERLNLKNMSFLTSSEIQSRFEAGCNLMTTYQECVGNQKGCMPDEGVHSWGEVEVFMCQLVLPSVKEHAGCFKSSADPRCDASKTSSSSTLCGLVTSIQTATSCLETIRPETCSSDAIEMLSPIREETEHIVSAIRCVTPEQHASSTTLIVDETTESTSASAEDDDDDVLTTNTSEESTATTAHDEEVENKPALNINMADAVNSLYYIYDICSANYSADPFAAIADKICAKQDEIAKWSNCYQKTLEKEKCAIRNATSKCEALISYNNNLDCAIVTMNDECEVDAQNLVVELQEEVNDLIIAGKCFEDKKEEEKEPVNDGDFHLQSTLPKCTEEQENGALGCLVELVEINKKLTAFANLNFLLEIASPNSTVVEGICSLFARYEQCLSATVFKNSQRCSFASPLNSLARIGLAPICSLDSRPLLSKHRDCFEKLATEADEDTNCQSSLSTLSNTVQMMLQGVHGEALLCKSFYTIRDTFTCGERAVKNKCEADALTDLLSLKTKMTSLGEEEGCPRDPPANLDEIISRPVARPTPVTMPPRAPTAKPLPIPSAPTPPVASSKCSIEDQKKFEECVKPLTSFQPHPLSVIAIPRDIDQACEAFHTFKACSAESNCHPLWARGMSAMFEYACNEANEQFKKVRKCIRETSMIEEVRSCVSDFSRGAPTAACMSSNRLHSCAIPQIQGKCGQDAADWVSNYIIRFANAIDVRCKVGRQLPVGRVVGIGCSAEEESIIEHCAAPLNDIGSRVEELFAGGMQSLIKNINSLAPVFAGACNLTDEFKTCAHFLLEGRTSCVVSSCMVEAGRGICQLSDPAKAIDDNLSCLFGQAQEPKFAQCIRSTISTLKQFNLSTLRAVLPKFIDCTRDIVVAKCGESPIKIMKAMSTPDICPIRPHQAPIVPINQPARVTPTLETVLSSSTMVSTSSESDSESAPEQETEPTVPSTTETTESPSTPTDGCGESGLVEYLQCETHLDQFAFRPISIIGDASKWDQFCQMANQTYIPCVEGLKCKYEPAASAQIGLIDSICNRKITLKDQKQHGMCLSEYTKSDAGVACISDFGKIDQLDSSSPAQMCDGINQVMRCSTSEIEKRCGFDAVLHVFSIHMHWANLFNASCILESPEPTKDSTSIDVNEVEPSRDQKPVVVTKDETTPVSITTAMNNDITESETTQSPPVQSSVSFHIILAALIPFFALF.

In terms of domain architecture, LDL-receptor class A spans 10 to 46 (ACPPNTFTCADGSCIPSDWKGDGEKDCEDGSDEEAVT). Intrachain disulfides connect C11-C23 and C18-C36. The segment at 27–47 (DWKGDGEKDCEDGSDEEAVTG) is disordered. Positions 34–45 (KDCEDGSDEEAV) are enriched in acidic residues. N79 carries an N-linked (GlcNAc...) asparagine glycan. The disordered stretch occupies residues 236-278 (STTLIVDETTESTSASAEDDDDDVLTTNTSEESTATTAHDEEV). Residues 261-272 (TTNTSEESTATT) show a composition bias toward low complexity. Positions 332–389 (YQKTLEKEKCAIRNATSKCEALISYNNNLDCAIVTMNDECEVDAQNLVVELQEEVNDL) form a coiled coil. Disordered stretches follow at residues 621–651 (ARPT…VASS) and 1005–1046 (SSST…PTDG). The segment covering 626–647 (VTMPPRAPTAKPLPIPSAPTPP) has biased composition (pro residues). Residues 1005 to 1015 (SSSTMVSTSSE) show a composition bias toward low complexity. Positions 1016-1026 (SDSESAPEQET) are enriched in acidic residues. Residues 1027–1044 (EPTVPSTTETTESPSTPT) show a composition bias toward low complexity. A helical membrane pass occupies residues 1263-1283 (VQSSVSFHIILAALIPFFALF).

Its subcellular location is the membrane. This is an uncharacterized protein from Caenorhabditis elegans.